A 486-amino-acid chain; its full sequence is Vacuolar protein sorting-associated protein 73 (486 aa).

Residues 1-26 are Cytoplasmic-facing; it reads MNRILSSASLLSNVSMPRQNKHKITK. The helical transmembrane segment at 27 to 47 threads the bilayer; that stretch reads ALCYAIIVASIGSIQFGYHLS. Residues 48 to 90 are Mitochondrial intermembrane-facing; it reads ELNAPQQVLSCSEFDIPMEGYPYDRTWLGKRGYKQCIPLNDEQ. A helical transmembrane segment spans residues 91 to 111; sequence IGIVTSVFCIGGILGSYFATS. The Cytoplasmic portion of the chain corresponds to 112–119; sequence LANIYGRK. The helical transmembrane segment at 120–140 threads the bilayer; sequence FSSLINCTLNIVGSLIIFNSN. The Mitochondrial intermembrane segment spans residues 141–146; that stretch reads SYRGLI. Residues 147 to 167 form a helical membrane-spanning segment; that stretch reads IGRILVGISCGSLIVIIPLFI. The Cytoplasmic portion of the chain corresponds to 168-178; the sequence is KEVAPSGWEGL. Residues 179-199 form a helical membrane-spanning segment; sequence LGSMTQICIRLGVLLTQGIAL. The Mitochondrial intermembrane portion of the chain corresponds to 200 to 208; the sequence is PLTDSYRWR. Residues 209 to 229 traverse the membrane as a helical segment; it reads WILFGSFLIAVLNFFMWFIVD. Residues 230-305 are Cytoplasmic-facing; the sequence is ESPKWLLAHG…RDRTNVKSRH (76 aa). Residues 306–326 form a helical membrane-spanning segment; that stretch reads VITVLLFGQQFCGINSIVLYG. Residues 327–342 lie on the Mitochondrial intermembrane side of the membrane; it reads TKIISQLYPQHAIRIN. The chain crosses the membrane as a helical span at residues 343–363; that stretch reads FFISMVNVLVTILVSLLIHSL. Residues 364 to 366 lie on the Cytoplasmic side of the membrane; the sequence is PRK. The helical transmembrane segment at 367-387 threads the bilayer; that stretch reads PLLMTSTVLVSVTAFIMGIAM. The Mitochondrial intermembrane segment spans residues 388–396; sequence NHNKMNLLI. The chain crosses the membrane as a helical span at residues 397–417; that stretch reads VFSFIYMGVFTMGLNPLPFII. The Cytoplasmic segment spans residues 418–432; the sequence is MREVSKPQDMVLAQR. The chain crosses the membrane as a helical span at residues 433-453; it reads YGTICNWVGTFIIAYTFPIIH. Residue D454 is a topological domain, mitochondrial intermembrane. A helical membrane pass occupies residues 455–475; sequence VLSGYVFIIFAIIACSISAFI. The Cytoplasmic segment spans residues 476–486; the sequence is WKKVPETKRSG.

This sequence belongs to the major facilitator superfamily. Sugar transporter (TC 2.A.1.1) family.

It localises to the mitochondrion membrane. In terms of biological role, may be involved in vacuolar protein sorting. The sequence is that of Vacuolar protein sorting-associated protein 73 (VPS73) from Saccharomyces cerevisiae (strain ATCC 204508 / S288c) (Baker's yeast).